The sequence spans 404 residues: Cysteine desulfurase IscS (404 aa).

Residues 75 to 76 (AT), Asn-155, Gln-183, and 203 to 205 (SAH) each bind pyridoxal 5'-phosphate. Lys-206 carries the post-translational modification N6-(pyridoxal phosphate)lysine. Thr-243 lines the pyridoxal 5'-phosphate pocket. Cys-328 acts as the Cysteine persulfide intermediate in catalysis. Cys-328 contacts [2Fe-2S] cluster.

The protein belongs to the class-V pyridoxal-phosphate-dependent aminotransferase family. NifS/IscS subfamily. In terms of assembly, homodimer. Forms a heterotetramer with IscU, interacts with other sulfur acceptors. Requires pyridoxal 5'-phosphate as cofactor.

The protein resides in the cytoplasm. It carries out the reaction (sulfur carrier)-H + L-cysteine = (sulfur carrier)-SH + L-alanine. It participates in cofactor biosynthesis; iron-sulfur cluster biosynthesis. In terms of biological role, master enzyme that delivers sulfur to a number of partners involved in Fe-S cluster assembly, tRNA modification or cofactor biosynthesis. Catalyzes the removal of elemental sulfur atoms from cysteine to produce alanine. Functions as a sulfur delivery protein for Fe-S cluster synthesis onto IscU, an Fe-S scaffold assembly protein, as well as other S acceptor proteins. The polypeptide is Cysteine desulfurase IscS (Vibrio vulnificus (strain CMCP6)).